The following is a 318-amino-acid chain: Porphobilinogen deaminase (318 aa).

The residue at position 241 (Cys-241) is an S-(dipyrrolylmethanemethyl)cysteine.

Belongs to the HMBS family. As to quaternary structure, monomer. Requires dipyrromethane as cofactor.

The catalysed reaction is 4 porphobilinogen + H2O = hydroxymethylbilane + 4 NH4(+). It functions in the pathway porphyrin-containing compound metabolism; protoporphyrin-IX biosynthesis; coproporphyrinogen-III from 5-aminolevulinate: step 2/4. Functionally, tetrapolymerization of the monopyrrole PBG into the hydroxymethylbilane pre-uroporphyrinogen in several discrete steps. This is Porphobilinogen deaminase from Citrifermentans bemidjiense (strain ATCC BAA-1014 / DSM 16622 / JCM 12645 / Bem) (Geobacter bemidjiensis).